The following is a 369-amino-acid chain: Glycerol-3-phosphate dehydrogenase [NAD(P)+] (369 aa).

Positions 6, 7, 27, 28, and 101 each coordinate NADPH. Sn-glycerol 3-phosphate-binding residues include lysine 101 and glycine 131. NADPH is bound at residue alanine 135. Residues lysine 186, aspartate 239, serine 249, arginine 250, and asparagine 251 each coordinate sn-glycerol 3-phosphate. Lysine 186 functions as the Proton acceptor in the catalytic mechanism. Arginine 250 contacts NADPH. Glutamate 276 lines the NADPH pocket. The interval 312-369 is disordered; it reads KDIAPHLTTDDEPQGERTRGERTTDDGQGQGRTSVWGSLKRAFDQLRDGGGSSRRDRP. Basic and acidic residues-rich tracts occupy residues 325-336 and 352-369; these read QGERTRGERTTD and RAFD…RDRP.

It belongs to the NAD-dependent glycerol-3-phosphate dehydrogenase family.

The protein resides in the cytoplasm. The catalysed reaction is sn-glycerol 3-phosphate + NAD(+) = dihydroxyacetone phosphate + NADH + H(+). It catalyses the reaction sn-glycerol 3-phosphate + NADP(+) = dihydroxyacetone phosphate + NADPH + H(+). It participates in membrane lipid metabolism; glycerophospholipid metabolism. In terms of biological role, catalyzes the reduction of the glycolytic intermediate dihydroxyacetone phosphate (DHAP) to sn-glycerol 3-phosphate (G3P), the key precursor for phospholipid synthesis. In Leifsonia xyli subsp. xyli (strain CTCB07), this protein is Glycerol-3-phosphate dehydrogenase [NAD(P)+].